The following is a 258-amino-acid chain: Indole-3-glycerol phosphate synthase 2 (258 aa).

Belongs to the TrpC family.

The enzyme catalyses 1-(2-carboxyphenylamino)-1-deoxy-D-ribulose 5-phosphate + H(+) = (1S,2R)-1-C-(indol-3-yl)glycerol 3-phosphate + CO2 + H2O. Its pathway is amino-acid biosynthesis; L-tryptophan biosynthesis; L-tryptophan from chorismate: step 4/5. Its function is as follows. The function of the second trp operon in S.coelicolor is to produce tryptophan for the biosynthesis of calcium-dependent antibiotic (CDA). This is Indole-3-glycerol phosphate synthase 2 (trpC2) from Streptomyces coelicolor (strain ATCC BAA-471 / A3(2) / M145).